Here is a 302-residue protein sequence, read N- to C-terminus: Phospho-N-acetylmuramoyl-pentapeptide-transferase (302 aa).

Helical transmembrane passes span 1–21 (MIAA…NLFR), 42–62 (GTPT…GVLS), 67–87 (VILT…FLSI), 101–121 (ALLQ…ETAV), 123–143 (FFGI…IVIV), 154–174 (GLDG…WFFL), 178–198 (GFSE…LIFN), 204–224 (IFMG…VSVL), 229–249 (FYLI…ILQI), and 279–299 (IVAV…EVFG).

Belongs to the glycosyltransferase 4 family. MraY subfamily. Requires Mg(2+) as cofactor.

It localises to the cell inner membrane. It carries out the reaction UDP-N-acetyl-alpha-D-muramoyl-L-alanyl-gamma-D-glutamyl-meso-2,6-diaminopimeloyl-D-alanyl-D-alanine + di-trans,octa-cis-undecaprenyl phosphate = di-trans,octa-cis-undecaprenyl diphospho-N-acetyl-alpha-D-muramoyl-L-alanyl-D-glutamyl-meso-2,6-diaminopimeloyl-D-alanyl-D-alanine + UMP. It functions in the pathway cell wall biogenesis; peptidoglycan biosynthesis. Catalyzes the initial step of the lipid cycle reactions in the biosynthesis of the cell wall peptidoglycan: transfers peptidoglycan precursor phospho-MurNAc-pentapeptide from UDP-MurNAc-pentapeptide onto the lipid carrier undecaprenyl phosphate, yielding undecaprenyl-pyrophosphoryl-MurNAc-pentapeptide, known as lipid I. In Thermotoga neapolitana (strain ATCC 49049 / DSM 4359 / NBRC 107923 / NS-E), this protein is Phospho-N-acetylmuramoyl-pentapeptide-transferase.